A 144-amino-acid chain; its full sequence is D-aminoacyl-tRNA deacylase (144 aa).

The short motif at 136 to 137 (GP) is the Gly-cisPro motif, important for rejection of L-amino acids element.

This sequence belongs to the DTD family. In terms of assembly, homodimer.

It localises to the cytoplasm. It carries out the reaction glycyl-tRNA(Ala) + H2O = tRNA(Ala) + glycine + H(+). The enzyme catalyses a D-aminoacyl-tRNA + H2O = a tRNA + a D-alpha-amino acid + H(+). Its function is as follows. An aminoacyl-tRNA editing enzyme that deacylates mischarged D-aminoacyl-tRNAs. Also deacylates mischarged glycyl-tRNA(Ala), protecting cells against glycine mischarging by AlaRS. Acts via tRNA-based rather than protein-based catalysis; rejects L-amino acids rather than detecting D-amino acids in the active site. By recycling D-aminoacyl-tRNA to D-amino acids and free tRNA molecules, this enzyme counteracts the toxicity associated with the formation of D-aminoacyl-tRNA entities in vivo and helps enforce protein L-homochirality. The protein is D-aminoacyl-tRNA deacylase of Haemophilus ducreyi (strain 35000HP / ATCC 700724).